Reading from the N-terminus, the 701-residue chain is Elongation factor G (701 aa).

The 283-residue stretch at 8–290 (ARYRNIGISA…AVIEYLPAPT (283 aa)) folds into the tr-type G domain. GTP is bound by residues 17-24 (AHIDAGKT), 88-92 (DTPGH), and 142-145 (NKMD).

Belongs to the TRAFAC class translation factor GTPase superfamily. Classic translation factor GTPase family. EF-G/EF-2 subfamily.

The protein resides in the cytoplasm. Its function is as follows. Catalyzes the GTP-dependent ribosomal translocation step during translation elongation. During this step, the ribosome changes from the pre-translocational (PRE) to the post-translocational (POST) state as the newly formed A-site-bound peptidyl-tRNA and P-site-bound deacylated tRNA move to the P and E sites, respectively. Catalyzes the coordinated movement of the two tRNA molecules, the mRNA and conformational changes in the ribosome. The polypeptide is Elongation factor G (Sodalis glossinidius (strain morsitans)).